The chain runs to 21 residues: Conchiolin protein p20 (21 aa).

Residues 1–14 are compositionally biased toward low complexity; the sequence is YQRXSRYYYYXGPP. A disordered region spans residues 1-21; the sequence is YQRXSRYYYYXGPPDDIDDRY.

Belongs to the N16 matrix protein family. In terms of assembly, homooligomer; disulfide-linked. May also be disulfide-linked to insoluble organic matrix. In terms of processing, according to PubMed:11250534, amino acids 4 and 11 may be sulfated or phosphorylated. By similarity with the N14 matrix protein, amino-acid 4 may be a cysteine involved in a disulfide bond. As to expression, component of conchiolin, the organic matrix of nacre. Is dispersed in calcium carbonate and also linked by disulfide bonds to the organic core of nacre.

The protein resides in the secreted. It localises to the extracellular space. It is found in the extracellular matrix. Functionally, may be specifically involved in the formation of the nacreous layer. This chain is Conchiolin protein p20, found in Pinctada maxima (Silver-lipped pearl oyster).